The chain runs to 247 residues: Coproheme decarboxylase (247 aa).

Fe-coproporphyrin III contacts are provided by residues R129, 143–147 (YPMDK), H170, Q183, and S221. Y143 is a catalytic residue.

It belongs to the ChdC family. Type 1 subfamily. The cofactor is Fe-coproporphyrin III.

The catalysed reaction is Fe-coproporphyrin III + 2 H2O2 + 2 H(+) = heme b + 2 CO2 + 4 H2O. It catalyses the reaction Fe-coproporphyrin III + H2O2 + H(+) = harderoheme III + CO2 + 2 H2O. The enzyme catalyses harderoheme III + H2O2 + H(+) = heme b + CO2 + 2 H2O. It functions in the pathway porphyrin-containing compound metabolism; protoheme biosynthesis. Functionally, involved in coproporphyrin-dependent heme b biosynthesis. Catalyzes the decarboxylation of Fe-coproporphyrin III (coproheme) to heme b (protoheme IX), the last step of the pathway. The reaction occurs in a stepwise manner with a three-propionate intermediate. The sequence is that of Coproheme decarboxylase from Bacillus mycoides (strain KBAB4) (Bacillus weihenstephanensis).